Here is a 289-residue protein sequence, read N- to C-terminus: ATP phosphoribosyltransferase (289 aa).

This sequence belongs to the ATP phosphoribosyltransferase family. Long subfamily. It depends on Mg(2+) as a cofactor.

The protein resides in the cytoplasm. The enzyme catalyses 1-(5-phospho-beta-D-ribosyl)-ATP + diphosphate = 5-phospho-alpha-D-ribose 1-diphosphate + ATP. The protein operates within amino-acid biosynthesis; L-histidine biosynthesis; L-histidine from 5-phospho-alpha-D-ribose 1-diphosphate: step 1/9. With respect to regulation, feedback inhibited by histidine. Functionally, catalyzes the condensation of ATP and 5-phosphoribose 1-diphosphate to form N'-(5'-phosphoribosyl)-ATP (PR-ATP). Has a crucial role in the pathway because the rate of histidine biosynthesis seems to be controlled primarily by regulation of HisG enzymatic activity. This chain is ATP phosphoribosyltransferase, found in Koribacter versatilis (strain Ellin345).